We begin with the raw amino-acid sequence, 183 residues long: GMP synthase [glutamine-hydrolyzing] subunit A (183 aa).

One can recognise a Glutamine amidotransferase type-1 domain in the interval Lys2–Lys183. The Nucleophile role is filled by Cys74. Residues His161 and Glu163 contribute to the active site.

As to quaternary structure, heterodimer composed of a glutamine amidotransferase subunit (A) and a GMP-binding subunit (B).

The enzyme catalyses XMP + L-glutamine + ATP + H2O = GMP + L-glutamate + AMP + diphosphate + 2 H(+). It participates in purine metabolism; GMP biosynthesis; GMP from XMP (L-Gln route): step 1/1. Functionally, catalyzes the synthesis of GMP from XMP. The sequence is that of GMP synthase [glutamine-hydrolyzing] subunit A from Archaeoglobus fulgidus (strain ATCC 49558 / DSM 4304 / JCM 9628 / NBRC 100126 / VC-16).